Reading from the N-terminus, the 286-residue chain is ATP synthase gamma chain (286 aa).

The protein belongs to the ATPase gamma chain family. In terms of assembly, F-type ATPases have 2 components, CF(1) - the catalytic core - and CF(0) - the membrane proton channel. CF(1) has five subunits: alpha(3), beta(3), gamma(1), delta(1), epsilon(1). CF(0) has three main subunits: a, b and c.

It is found in the cell inner membrane. Functionally, produces ATP from ADP in the presence of a proton gradient across the membrane. The gamma chain is believed to be important in regulating ATPase activity and the flow of protons through the CF(0) complex. In Shewanella denitrificans (strain OS217 / ATCC BAA-1090 / DSM 15013), this protein is ATP synthase gamma chain.